We begin with the raw amino-acid sequence, 469 residues long: Acetyl-CoA decarbonylase/synthase complex subunit beta 1 (469 aa).

[Ni-Fe-S] cluster contacts are provided by cysteine 189, cysteine 192, cysteine 278, and cysteine 280.

Belongs to the CdhC family. Monomer. The ACDS complex is made up of alpha, epsilon, beta, gamma and delta chains with a probable stoichiometry of (alpha(2)epsilon(2))(4)-beta(8)-(gamma(1)delta(1))(8) (Potential). It depends on [Ni-Fe-S] cluster as a cofactor.

It carries out the reaction Co(I)-[corrinoid Fe-S protein] + acetyl-CoA + H(+) = methyl-Co(III)-[corrinoid Fe-S protein] + CO + CoA. It participates in one-carbon metabolism; methanogenesis from acetate. Functionally, part of a complex that catalyzes the reversible cleavage of acetyl-CoA, allowing growth on acetate as sole source of carbon and energy. The alpha-epsilon complex generates CO from CO(2), while the beta subunit (this protein) combines the CO with CoA and a methyl group to form acetyl-CoA. The methyl group, which is incorporated into acetyl-CoA, is transferred to the beta subunit by a corrinoid iron-sulfur protein (the gamma-delta complex). This Methanosarcina thermophila protein is Acetyl-CoA decarbonylase/synthase complex subunit beta 1 (cdhC1).